A 364-amino-acid polypeptide reads, in one-letter code: DNA replication and repair protein RecF (364 aa).

An ATP-binding site is contributed by 30-37 (GNNAQGKT).

It belongs to the RecF family.

Its subcellular location is the cytoplasm. The RecF protein is involved in DNA metabolism; it is required for DNA replication and normal SOS inducibility. RecF binds preferentially to single-stranded, linear DNA. It also seems to bind ATP. In Streptococcus uberis (strain ATCC BAA-854 / 0140J), this protein is DNA replication and repair protein RecF.